The primary structure comprises 424 residues: tRNA(Ile)-lysidine synthase (424 aa).

Residue 26-31 (SGGIDS) coordinates ATP.

It belongs to the tRNA(Ile)-lysidine synthase family.

It localises to the cytoplasm. It catalyses the reaction cytidine(34) in tRNA(Ile2) + L-lysine + ATP = lysidine(34) in tRNA(Ile2) + AMP + diphosphate + H(+). Its function is as follows. Ligates lysine onto the cytidine present at position 34 of the AUA codon-specific tRNA(Ile) that contains the anticodon CAU, in an ATP-dependent manner. Cytidine is converted to lysidine, thus changing the amino acid specificity of the tRNA from methionine to isoleucine. This is tRNA(Ile)-lysidine synthase from Streptococcus agalactiae serotype V (strain ATCC BAA-611 / 2603 V/R).